A 464-amino-acid chain; its full sequence is MNWTVDIPIDQLPPLPPLSDELRQRLDSALAKPAVQQPSWDPDAAKAMRTVLESVPPVTVPSEIEKLKGLLADVAQGKAFLLQGGDCAETFVDNTEPHIRANIRTLLQMAVVLTYGASMPVVKVARIAGQYAKPRSSDVDALGLKSYRGDMINGFAPDAAAREHDPSRLVRAYANASAAMNLMRALTSSGLASLHLVHEWNREFVRTSPAGARYEALAGEIDRGLNFMSACGVADRNLQTAEIFASHEALVLDYERAMLRLSNPAETDGAAKLYDQSAHYLWIGERTRQLDGAHVAFAEVIANPIGVKLGPTTTPELAVEYVERLDPNNEPGRLTLVTRMGNNKVRDLLPPIIEKVQATGHQVIWQCDPMHGNTHESSTGYKTRHFDRIVDEVQGFFEVHHALGTHPGGIHVEITGENVTECLGGAQDISDSDLAGRYETACDPRLNTQQSLELAFLVAEMLRD.

A Mn(2+)-binding site is contributed by Cys87. Residues Arg126, 285 to 286 (ER), Lys308, and Arg339 each bind phosphoenolpyruvate. His371, Glu413, and Asp443 together coordinate Mn(2+).

It belongs to the class-II DAHP synthase family. As to quaternary structure, homodimer. Probably interacts with MSMEG_5536. Requires Mn(2+) as cofactor. The cofactor is Co(2+). Cd(2+) is required as a cofactor.

The enzyme catalyses D-erythrose 4-phosphate + phosphoenolpyruvate + H2O = 7-phospho-2-dehydro-3-deoxy-D-arabino-heptonate + phosphate. It functions in the pathway metabolic intermediate biosynthesis; chorismate biosynthesis; chorismate from D-erythrose 4-phosphate and phosphoenolpyruvate: step 1/7. Catalyzes an aldol-like condensation reaction between phosphoenolpyruvate (PEP) and D-erythrose 4-phosphate (E4P) to generate 3-deoxy-D-arabino-heptulosonate 7-phosphate (DAH7P) and inorganic phosphate. The sequence is that of Phospho-2-dehydro-3-deoxyheptonate aldolase AroG (aroG) from Mycolicibacterium smegmatis (strain ATCC 700084 / mc(2)155) (Mycobacterium smegmatis).